The chain runs to 329 residues: E3 ubiquitin-protein ligase SINA-like 4 (329 aa).

Residues M1–G12 are compositionally biased toward basic and acidic residues. The disordered stretch occupies residues M1–L58. The segment covering K13–R24 has biased composition (basic residues). Residues C86–K122 form an RING-type; degenerate zinc finger. Residues V136–D325 are SBD. An SIAH-type zinc finger spans residues A139–K198. Zn(2+) contacts are provided by C144, C151, H164, C168, C175, C180, H192, and H197.

Belongs to the SINA (Seven in absentia) family.

The enzyme catalyses S-ubiquitinyl-[E2 ubiquitin-conjugating enzyme]-L-cysteine + [acceptor protein]-L-lysine = [E2 ubiquitin-conjugating enzyme]-L-cysteine + N(6)-ubiquitinyl-[acceptor protein]-L-lysine.. Its pathway is protein modification; protein ubiquitination. In terms of biological role, E3 ubiquitin-protein ligase that mediates ubiquitination and subsequent proteasomal degradation of target proteins. E3 ubiquitin ligases accept ubiquitin from an E2 ubiquitin-conjugating enzyme in the form of a thioester and then directly transfers the ubiquitin to targeted substrates. It probably triggers the ubiquitin-mediated degradation of different substrates. The polypeptide is E3 ubiquitin-protein ligase SINA-like 4 (Arabidopsis thaliana (Mouse-ear cress)).